A 338-amino-acid chain; its full sequence is Anthranilate phosphoribosyltransferase (338 aa).

5-phospho-alpha-D-ribose 1-diphosphate is bound by residues Gly-81, Gly-84–Asp-85, Thr-89, Asn-91–Thr-94, Lys-109–Ser-117, and Ala-121. Gly-81 contributes to the anthranilate binding site. A Mg(2+)-binding site is contributed by Ser-93. Asn-112 serves as a coordination point for anthranilate. Residue Arg-167 participates in anthranilate binding. 2 residues coordinate Mg(2+): Asp-226 and Glu-227.

The protein belongs to the anthranilate phosphoribosyltransferase family. Homodimer. The cofactor is Mg(2+).

The catalysed reaction is N-(5-phospho-beta-D-ribosyl)anthranilate + diphosphate = 5-phospho-alpha-D-ribose 1-diphosphate + anthranilate. It participates in amino-acid biosynthesis; L-tryptophan biosynthesis; L-tryptophan from chorismate: step 2/5. Its function is as follows. Catalyzes the transfer of the phosphoribosyl group of 5-phosphorylribose-1-pyrophosphate (PRPP) to anthranilate to yield N-(5'-phosphoribosyl)-anthranilate (PRA). The protein is Anthranilate phosphoribosyltransferase of Cereibacter sphaeroides (strain ATCC 17023 / DSM 158 / JCM 6121 / CCUG 31486 / LMG 2827 / NBRC 12203 / NCIMB 8253 / ATH 2.4.1.) (Rhodobacter sphaeroides).